The sequence spans 210 residues: Outer-membrane lipoprotein carrier protein (210 aa).

A signal peptide spans 1–26 (MHMIRRAAGALAVFAVAALAAAPAWA).

It belongs to the LolA family. Monomer.

The protein localises to the periplasm. In terms of biological role, participates in the translocation of lipoproteins from the inner membrane to the outer membrane. Only forms a complex with a lipoprotein if the residue after the N-terminal Cys is not an aspartate (The Asp acts as a targeting signal to indicate that the lipoprotein should stay in the inner membrane). The polypeptide is Outer-membrane lipoprotein carrier protein (Bordetella pertussis (strain Tohama I / ATCC BAA-589 / NCTC 13251)).